The primary structure comprises 468 residues: 55 kDa erythrocyte membrane protein (468 aa).

The PDZ domain maps to 73–154 (LVQFEKVTEE…MVSIKVIPNQ (82 aa)). An SH3 domain is found at 160 to 230 (ALQMFMRAQF…PSPELQEWRV (71 aa)). The region spanning 284 to 453 (RKTLVLIGAS…SLKLLEEAFE (170 aa)) is the Guanylate kinase-like domain.

It belongs to the MAGUK family.

It is found in the membrane. Its subcellular location is the cell projection. The protein localises to the stereocilium. May play a role in the regulation of neutrophil polarization. The polypeptide is 55 kDa erythrocyte membrane protein (MPP1) (Gallus gallus (Chicken)).